The chain runs to 310 residues: Protein BCCIP homolog (310 aa).

A disordered region spans residues 1 to 59; the sequence is MASNAKRRALEPERLPERNEEEEDDMEGDNSDESDDIEDDESEEEEEVNEEVNIDFEAY. Over residues 8–18 the composition is skewed to basic and acidic residues; sequence RALEPERLPER. Over residues 19-54 the composition is skewed to acidic residues; it reads NEEEEDDMEGDNSDESDDIEDDESEEEEEVNEEVNI.

The protein belongs to the BCP1 family.

Its subcellular location is the nucleus. It is found in the cytoplasm. The protein resides in the cytoskeleton. The protein localises to the microtubule organizing center. It localises to the centrosome. Its subcellular location is the centriole. It is found in the spindle pole. Its function is as follows. During interphase, required for microtubule organizing and anchoring activities. During mitosis, required for the organization and stabilization of the spindle pole. May promote cell cycle arrest and DNA repair. This Xenopus tropicalis (Western clawed frog) protein is Protein BCCIP homolog (bccip).